The following is a 688-amino-acid chain: UvrABC system protein C (688 aa).

Positions Met-1–Ala-14 are enriched in basic and acidic residues. A disordered region spans residues Met-1–Glu-20. Positions Asn-71 to Val-149 constitute a GIY-YIG domain. Positions Gln-259–Val-294 constitute a UVR domain.

This sequence belongs to the UvrC family. In terms of assembly, interacts with UvrB in an incision complex.

It localises to the cytoplasm. Functionally, the UvrABC repair system catalyzes the recognition and processing of DNA lesions. UvrC both incises the 5' and 3' sides of the lesion. The N-terminal half is responsible for the 3' incision and the C-terminal half is responsible for the 5' incision. The chain is UvrABC system protein C from Mesorhizobium japonicum (strain LMG 29417 / CECT 9101 / MAFF 303099) (Mesorhizobium loti (strain MAFF 303099)).